The sequence spans 980 residues: Peroxisomal ATPase PEX6 (980 aa).

An Omega-N-methylarginine modification is found at arginine 119. ATP contacts are provided by residues 470-477 and 744-751; these read GPPGCGKT and GPPGTGKT.

Belongs to the AAA ATPase family. Interacts with PEX1; forming the PEX1-PEX6 AAA ATPase complex, which is composed of a heterohexamer formed by a trimer of PEX1-PEX6 dimers. Interacts with PEX26; interaction is direct and promotes recruitment to peroxisomal membranes. Interacts with ZFAND6. Expressed in the retina, at higher levels in the photoreceptor layer at the joint between the outer and inner segments.

The protein localises to the cytoplasm. It is found in the cytosol. The protein resides in the peroxisome membrane. It localises to the cell projection. Its subcellular location is the cilium. The protein localises to the photoreceptor outer segment. It catalyses the reaction ATP + H2O = ADP + phosphate + H(+). In terms of biological role, component of the PEX1-PEX6 AAA ATPase complex, a protein dislocase complex that mediates the ATP-dependent extraction of the PEX5 receptor from peroxisomal membranes, an essential step for PEX5 recycling. Specifically recognizes PEX5 monoubiquitinated at 'Cys-11', and pulls it out of the peroxisome lumen through the PEX2-PEX10-PEX12 retrotranslocation channel. Extraction by the PEX1-PEX6 AAA ATPase complex is accompanied by unfolding of the TPR repeats and release of bound cargo from PEX5. The sequence is that of Peroxisomal ATPase PEX6 from Homo sapiens (Human).